The primary structure comprises 258 residues: uncharacterized protein (258 aa).

Solcar repeat units lie at residues 9–78, 81–160, and 165–246; these read KPIL…AKAR, PGVR…FKKK, and DHVF…VKSH. Transmembrane regions (helical) follow at residues 11–31, 53–73, 87–107, 139–159, 171–191, and 218–239; these read ILVG…LSTI, GLSS…FVYE, LVSA…AEVV, MCGR…QFKK, PKGA…LDVI, and FEKG…YLGT.

The protein belongs to the mitochondrial carrier (TC 2.A.29) family.

Its subcellular location is the mitochondrion inner membrane. This is an uncharacterized protein from Schizosaccharomyces pombe (strain 972 / ATCC 24843) (Fission yeast).